We begin with the raw amino-acid sequence, 128 residues long: Capsid protein (128 aa).

9 residues coordinate RNA: Arg40, Arg46, Ala53, Arg55, Lys59, Asp61, Val84, Ser86, and Thr90.

It belongs to the Leviviricetes capsid protein family. In terms of assembly, homodimer. The dimers in the capsid are covalently linked with disulfide bridges. The homodimers binds to the viral RNA via an operator hairpin, but also to many other RNA sequences in the viral genome; this interaction probably shifts the virus from the replicative to the assembly phase and ensures specific encapsidation of the viral genome.

The protein resides in the virion. Functionally, capsid protein self-assembles to form an icosahedral capsid with a T=3 symmetry, about 26 nm in diameter, and consisting of 89 capsid proteins dimers (178 capsid proteins). Involved in viral genome encapsidation through the interaction between a capsid protein dimer and the multiple packaging signals present in the RNA genome. Acts as a translational repressor of viral replicase synthesis late in infection. This latter function is the result of capsid protein interaction with an RNA hairpin which contains the replicase ribosome-binding site. In Pseudomonas aeruginosa (Bacteriophage PP7), this protein is Capsid protein.